A 102-amino-acid polypeptide reads, in one-letter code: Feather keratin (102 aa).

The residue at position 1 (serine 1) is an N-acetylserine.

Belongs to the avian keratin family. As to quaternary structure, the avian keratins (F-ker, S-ker, C-ker and B-ker) are a complex mixture of very similar polypeptides.

The chain is Feather keratin from Dromaius novaehollandiae (Emu).